We begin with the raw amino-acid sequence, 859 residues long: Leucine--tRNA ligase (859 aa).

A 'HIGH' region motif is present at residues proline 42–histidine 52. A 'KMSKS' region motif is present at residues lysine 611–serine 615. Lysine 614 is an ATP binding site.

It belongs to the class-I aminoacyl-tRNA synthetase family.

It is found in the cytoplasm. The enzyme catalyses tRNA(Leu) + L-leucine + ATP = L-leucyl-tRNA(Leu) + AMP + diphosphate. The chain is Leucine--tRNA ligase from Fusobacterium nucleatum subsp. nucleatum (strain ATCC 25586 / DSM 15643 / BCRC 10681 / CIP 101130 / JCM 8532 / KCTC 2640 / LMG 13131 / VPI 4355).